The chain runs to 513 residues: Keratin, type II cuticular Hb2 (513 aa).

The head stretch occupies residues 1–120; it reads MSYHSFQPGS…PTVQRVKRDE (120 aa). An IF rod domain is found at 120–431; that stretch reads EKEQIKCLNN…RLLEGEEHRL (312 aa). The interval 121-155 is coil 1A; that stretch reads KEQIKCLNNRFASFINKVRFLEQKNKLLETKWNFM. The segment at 156-165 is linker 1; the sequence is QQQRCCQTNI. The segment at 166 to 266 is coil 1B; sequence EPIFEGYISA…YEEEICLLQS (101 aa). A linker 12 region spans residues 267-283; the sequence is QISETSVIVKMDNSREL. The tract at residues 284–427 is coil 2; that stretch reads DVDGIIAEIK…ATYRRLLEGE (144 aa). Residues 428 to 513 form a tail region; sequence EHRLCEGIGP…AGGSSPSHKH (86 aa).

Belongs to the intermediate filament family. Heterotetramer of two type I and two type II keratins.

The sequence is that of Keratin, type II cuticular Hb2 (KRT82) from Homo sapiens (Human).